A 130-amino-acid chain; its full sequence is Classical arabinogalactan protein 7 (130 aa).

The N-terminal stretch at 1–21 (MNSKIIEAFFIVALFTTSCLA) is a signal peptide. Pyrrolidone carboxylic acid is present on glutamine 22. The segment at 22 to 108 (QAPAPSPTTT…DASAPPPNAA (87 aa)) is disordered. 5 positions are modified to 4-hydroxyproline: proline 24, proline 26, proline 28, proline 35, and proline 36. O-linked (Ara...) hydroxyproline glycans are attached at residues proline 24, proline 26, proline 28, proline 35, and proline 36. The segment covering 33 to 68 (TPPPVATPPPAATPAPTTTPPPAVSPAPTSSPPSSA) has biased composition (pro residues). The GPI-anchor amidated asparagine moiety is linked to residue asparagine 106. Residues 107 to 130 (AALTNKAFVVGSLVAAIIYAVVLA) constitute a propeptide, removed in mature form.

It belongs to the classical AGP family. In terms of processing, O-glycosylated on hydroxyprolines; noncontiguous hydroxylproline residues are glycosylated with arabinogalactan.

It localises to the cell membrane. Its function is as follows. Proteoglycan that seems to be implicated in diverse developmental roles such as differentiation, cell-cell recognition, embryogenesis and programmed cell death. This Arabidopsis thaliana (Mouse-ear cress) protein is Classical arabinogalactan protein 7 (AGP7).